A 576-amino-acid chain; its full sequence is Arginine--tRNA ligase (576 aa).

The 'HIGH' region signature appears at 128–136 (PTGPMHIGH).

The protein belongs to the class-I aminoacyl-tRNA synthetase family. As to quaternary structure, monomer.

It localises to the cytoplasm. It carries out the reaction tRNA(Arg) + L-arginine + ATP = L-arginyl-tRNA(Arg) + AMP + diphosphate. The sequence is that of Arginine--tRNA ligase from Rickettsia conorii (strain ATCC VR-613 / Malish 7).